Here is a 292-residue protein sequence, read N- to C-terminus: Diaminopimelate epimerase (292 aa).

Asn-14 and Asn-81 together coordinate substrate. Cys-90 acts as the Proton donor in catalysis. Residues 91–92 (GN), Asn-166, Asn-202, and 220–221 (ER) contribute to the substrate site. Cys-229 acts as the Proton acceptor in catalysis. 230-231 (GT) lines the substrate pocket.

It belongs to the diaminopimelate epimerase family. As to quaternary structure, homodimer.

Its subcellular location is the cytoplasm. It catalyses the reaction (2S,6S)-2,6-diaminopimelate = meso-2,6-diaminopimelate. The protein operates within amino-acid biosynthesis; L-lysine biosynthesis via DAP pathway; DL-2,6-diaminopimelate from LL-2,6-diaminopimelate: step 1/1. Catalyzes the stereoinversion of LL-2,6-diaminopimelate (L,L-DAP) to meso-diaminopimelate (meso-DAP), a precursor of L-lysine and an essential component of the bacterial peptidoglycan. This is Diaminopimelate epimerase from Rhodococcus erythropolis (strain PR4 / NBRC 100887).